We begin with the raw amino-acid sequence, 327 residues long: Phenylalanine--tRNA ligase alpha subunit (327 aa).

Position 252 (glutamate 252) interacts with Mg(2+).

It belongs to the class-II aminoacyl-tRNA synthetase family. Phe-tRNA synthetase alpha subunit type 1 subfamily. Tetramer of two alpha and two beta subunits. Mg(2+) serves as cofactor.

Its subcellular location is the cytoplasm. The catalysed reaction is tRNA(Phe) + L-phenylalanine + ATP = L-phenylalanyl-tRNA(Phe) + AMP + diphosphate + H(+). The protein is Phenylalanine--tRNA ligase alpha subunit of Yersinia enterocolitica serotype O:8 / biotype 1B (strain NCTC 13174 / 8081).